The sequence spans 229 residues: Orotidine 5'-phosphate decarboxylase (229 aa).

Substrate is bound by residues D10, K32, 59–68, T119, R180, Q189, G209, and R210; that span reads DLKFHDIPNT. K61 acts as the Proton donor in catalysis.

This sequence belongs to the OMP decarboxylase family. Type 1 subfamily. As to quaternary structure, homodimer.

The catalysed reaction is orotidine 5'-phosphate + H(+) = UMP + CO2. Its pathway is pyrimidine metabolism; UMP biosynthesis via de novo pathway; UMP from orotate: step 2/2. Functionally, catalyzes the decarboxylation of orotidine 5'-monophosphate (OMP) to uridine 5'-monophosphate (UMP). The sequence is that of Orotidine 5'-phosphate decarboxylase from Legionella pneumophila (strain Paris).